The chain runs to 561 residues: Potassium-transporting ATPase potassium-binding subunit (561 aa).

11 helical membrane-spanning segments follow: residues 5–25, 60–80, 86–106, 131–151, 177–197, 247–267, 281–301, 376–396, 415–435, 489–509, and 531–551; these read LAAGLQIASVVAVLALVYVPL, CGYAGSVLGFSLAGVLVLYVL, VLPLSHGLAGVSPAVAFNTAV, GLAVQNFVSAAVGMAVAVALI, ILLPLAFVIALILLSQGVIQS, PTPLSNVVQILAILLIPVALT, LTVLAVMAGIYAVILGVTTAA, GLYGILVLAVIAVFVGGLLVG, ALAVLVMPALVLIGTAITVVL, LGLCMLFGRFLPILFVLALAG, and FAGLLTGTVVLVAALTFFPVL.

It belongs to the KdpA family. The system is composed of three essential subunits: KdpA, KdpB and KdpC.

Its subcellular location is the cell membrane. Part of the high-affinity ATP-driven potassium transport (or Kdp) system, which catalyzes the hydrolysis of ATP coupled with the electrogenic transport of potassium into the cytoplasm. This subunit binds the extracellular potassium ions and delivers the ions to the membrane domain of KdpB through an intramembrane tunnel. The polypeptide is Potassium-transporting ATPase potassium-binding subunit (Nocardia farcinica (strain IFM 10152)).